The sequence spans 207 residues: Putative 3-methyladenine DNA glycosylase (207 aa).

Belongs to the DNA glycosylase MPG family.

This Listeria monocytogenes serotype 4b (strain CLIP80459) protein is Putative 3-methyladenine DNA glycosylase.